Here is a 223-residue protein sequence, read N- to C-terminus: Ribose-5-phosphate isomerase A (223 aa).

Residues 28-31 (TGST), 81-84 (DGAD), and 94-97 (KGGG) each bind substrate. Glu-103 serves as the catalytic Proton acceptor. Lys-121 is a binding site for substrate.

The protein belongs to the ribose 5-phosphate isomerase family. Homodimer.

The enzyme catalyses aldehydo-D-ribose 5-phosphate = D-ribulose 5-phosphate. It participates in carbohydrate degradation; pentose phosphate pathway; D-ribose 5-phosphate from D-ribulose 5-phosphate (non-oxidative stage): step 1/1. In terms of biological role, catalyzes the reversible conversion of ribose-5-phosphate to ribulose 5-phosphate. This is Ribose-5-phosphate isomerase A from Ruthia magnifica subsp. Calyptogena magnifica.